The following is a 153-amino-acid chain: Transcriptional repressor NrdR (153 aa).

Residues 3 to 34 (CPSCSHNGTRVLDSRPVDEGRSIRRRRECESC) fold into a zinc finger. One can recognise an ATP-cone domain in the interval 49-139 (LIVVKKEGTR…VYRQFKDLNV (91 aa)).

Belongs to the NrdR family. The cofactor is Zn(2+).

Negatively regulates transcription of bacterial ribonucleotide reductase nrd genes and operons by binding to NrdR-boxes. The polypeptide is Transcriptional repressor NrdR (Bacillus anthracis (strain A0248)).